A 296-amino-acid polypeptide reads, in one-letter code: MFS-type transporter pytF (296 aa).

Helical transmembrane passes span 30–50 (WLVV…LNSF), 72–92 (WIGS…GPVF), 98–118 (KVLF…VSLC), 124–144 (FILA…YPTI), 157–177 (LAMG…PLIL), 180–200 (LFAV…SFAL), and 238–258 (VVGM…IPLF). Asn-265 carries N-linked (GlcNAc...) asparagine glycosylation. A helical transmembrane segment spans residues 271 to 291 (SLISILNAGSFVGRIVSGALA).

It belongs to the major facilitator superfamily. Monocarboxylate porter (TC 2.A.1.13) family.

It is found in the cell membrane. Functionally, MFS-type transporter; part of the gene cluster that mediates the biosynthesis of pyranterreones, a family of antioxidative compounds. Directly involved in the secretion of pyranterreones. The chain is MFS-type transporter pytF from Aspergillus terreus (strain NIH 2624 / FGSC A1156).